Here is a 320-residue protein sequence, read N- to C-terminus: Cytochrome f (320 aa).

A signal peptide spans 1 to 35; sequence MQTRKTFSWIKEQITRSISASLMIYIITRTSISSA. The heme site is built by Y36, C56, C59, and H60. Residues 286–306 traverse the membrane as a helical segment; that stretch reads VQGLLFFLASVILAQIFLVLK.

The protein belongs to the cytochrome f family. The 4 large subunits of the cytochrome b6-f complex are cytochrome b6, subunit IV (17 kDa polypeptide, petD), cytochrome f and the Rieske protein, while the 4 small subunits are PetG, PetL, PetM and PetN. The complex functions as a dimer. Heme is required as a cofactor.

Its subcellular location is the plastid. It is found in the chloroplast thylakoid membrane. Functionally, component of the cytochrome b6-f complex, which mediates electron transfer between photosystem II (PSII) and photosystem I (PSI), cyclic electron flow around PSI, and state transitions. In Panax ginseng (Korean ginseng), this protein is Cytochrome f.